A 284-amino-acid polypeptide reads, in one-letter code: 4-hydroxybenzoate octaprenyltransferase (284 aa).

9 consecutive transmembrane segments (helical) span residues 19–39, 42–62, 85–105, 107–127, 134–154, 165–185, 211–231, 233–253, and 261–281; these read IPIL…SHGL, ISYL…GCII, GQLS…VAFI, VLFL…LAIL, FFAI…FMAF, AWIF…IYAL, ILLF…YCDF, SFFY…YFLY, and CINA…IAVI.

The protein belongs to the UbiA prenyltransferase family. Mg(2+) is required as a cofactor.

Its subcellular location is the cell inner membrane. It carries out the reaction all-trans-octaprenyl diphosphate + 4-hydroxybenzoate = 4-hydroxy-3-(all-trans-octaprenyl)benzoate + diphosphate. The protein operates within cofactor biosynthesis; ubiquinone biosynthesis. In terms of biological role, catalyzes the prenylation of para-hydroxybenzoate (PHB) with an all-trans polyprenyl group. Mediates the second step in the final reaction sequence of ubiquinone-8 (UQ-8) biosynthesis, which is the condensation of the polyisoprenoid side chain with PHB, generating the first membrane-bound Q intermediate 3-octaprenyl-4-hydroxybenzoate. The polypeptide is 4-hydroxybenzoate octaprenyltransferase (Francisella tularensis subsp. tularensis (strain FSC 198)).